Here is a 397-residue protein sequence, read N- to C-terminus: MKTVGELELSGKRVFIRVDFNVPLDKEFRVKDDLRIRAVLPTLNKVIEKGGKAILASHLGRPKGKPSAEFSLKPVGEHLSRLIDRPVPLAPDCTGREVVERIAQMKNGDVLLLENLRFHAEEEKNDEAFSRALADLADVYVNDAFAVSHRAHASVHGMTRFARECAAGYQLENEIKYFRKAMDNPARPMAMVIGGAKVSTKIGVLEHLISRVDFLVIGGAMANTFFKAQGKEVGRSLVEDDHLETAARLLKAAAEKGVKVYLPVDAVVAPSLESCGDVQQVPVEKVPKDRLILDVGSKSIEVFESVLKNCRTIVWNGPLGAFETPPFNKGTFALAEFLGSLDALTVIGGGDSAAAVKQANMEDKVSYVSTGGGAFLEMLEGITLPGVAALEECCGRS.

Residues 19–21 (DFN), Arg-35, 58–61 (HLGR), Arg-117, and Arg-150 each bind substrate. Residues Lys-201, Glu-323, and 349 to 352 (GGDS) contribute to the ATP site.

This sequence belongs to the phosphoglycerate kinase family. As to quaternary structure, monomer.

The protein localises to the cytoplasm. The catalysed reaction is (2R)-3-phosphoglycerate + ATP = (2R)-3-phospho-glyceroyl phosphate + ADP. The protein operates within carbohydrate degradation; glycolysis; pyruvate from D-glyceraldehyde 3-phosphate: step 2/5. The chain is Phosphoglycerate kinase from Syntrophobacter fumaroxidans (strain DSM 10017 / MPOB).